The sequence spans 443 residues: Dynein regulatory complex protein 9 (443 aa).

Disordered stretches follow at residues Met-1 to Glu-40 and Gly-415 to Lys-443. One can recognise an IQ domain in the interval Glu-393 to Lys-422. The span at Gly-415 to Gly-430 shows a compositional bias: basic and acidic residues. Residues Lys-431 to Lys-443 are compositionally biased toward basic residues.

This sequence belongs to the DRC9 family. In terms of assembly, component of the nexin-dynein regulatory complex (N-DRC). Interacts (via IQ domain) with CALM when calcium levels are low. Does not interact with CALM in the presence of Ca(2+). Interacts with the HSP70 proteins HSPA1L and HSPA8. May form a complex with CAMK4 and HSP70.

The protein localises to the cytoplasm. Its subcellular location is the cell projection. The protein resides in the cilium. It is found in the flagellum. It localises to the cytoskeleton. The protein localises to the flagellum axoneme. Functionally, component of the nexin-dynein regulatory complex (N-DRC), a key regulator of ciliary/flagellar motility which maintains the alignment and integrity of the distal axoneme and regulates microtubule sliding in motile axonemes. Binds calmodulin when cellular Ca(2+) levels are low and thereby contributes to the regulation of calcium and calmodulin-dependent protein kinase IV (CAMK4) activity; contributes to the regulation of CAMK4 signaling cascades. Required for normal axoneme assembly in sperm flagella, normal sperm tail formation and for male fertility. The sequence is that of Dynein regulatory complex protein 9 (IQCG) from Macaca fascicularis (Crab-eating macaque).